We begin with the raw amino-acid sequence, 978 residues long: Probable serine/threonine-protein kinase PLK (978 aa).

The span at 19-36 (IQIQQQQFKQPQQQPQQK) shows a compositional bias: low complexity. 2 disordered regions span residues 19-66 (IQIQ…SSIH) and 121-143 (QQQQ…NEPQ). Residues 37–53 (SNSCFSDQENYPANIQP) are compositionally biased toward polar residues. The segment covering 54–64 (SSSTSSSSSSS) has biased composition (low complexity). In terms of domain architecture, Protein kinase spans 163–416 (YRQGEFLGKG…LTQILEHDFF (254 aa)). Residues 169–177 (LGKGGFAKC) and K192 contribute to the ATP site. The active-site Proton acceptor is D286. Disordered regions lie at residues 463–554 (GTTS…FANL) and 601–638 (ENQQ…TVTT). Composition is skewed to low complexity over residues 473 to 492 (HHYQ…NYQQ) and 500 to 549 (INNM…NINN). Coiled coils occupy residues 497-555 (KKQI…ANLS) and 592-630 (IKQQ…INNN). The POLO box 1 domain maps to 696–780 (YISQYADFTN…IKYFLNHFTN (85 aa)). The interval 798-819 (NNNNNNNVENVTNNNNNNSNNS) is disordered. The POLO box 2 domain maps to 826–904 (YVKKWIKFDN…IYGTLSNNLY (79 aa)). The disordered stretch occupies residues 908-978 (PESSFQQLPQ…SIPQPQLINQ (71 aa)). The segment covering 913-978 (QQLPQQQYQQ…SIPQPQLINQ (66 aa)) has biased composition (low complexity).

This sequence belongs to the protein kinase superfamily. Ser/Thr protein kinase family. CDC5/Polo subfamily.

It carries out the reaction L-seryl-[protein] + ATP = O-phospho-L-seryl-[protein] + ADP + H(+). The catalysed reaction is L-threonyl-[protein] + ATP = O-phospho-L-threonyl-[protein] + ADP + H(+). This is Probable serine/threonine-protein kinase PLK (PLK) from Dictyostelium discoideum (Social amoeba).